Consider the following 89-residue polypeptide: Cell division topological specificity factor (89 aa).

This sequence belongs to the MinE family.

Prevents the cell division inhibition by proteins MinC and MinD at internal division sites while permitting inhibition at polar sites. This ensures cell division at the proper site by restricting the formation of a division septum at the midpoint of the long axis of the cell. This Desulforudis audaxviator (strain MP104C) protein is Cell division topological specificity factor.